The primary structure comprises 480 residues: MDFSNFLCIEQELKLIALLVILFLYDTFCSKEWKKYFQNIAIVGFAIVIISEFPPYFTMYGEAFGGIHISSQLTFFMKSILNVATFLVFLQANKWLSSEKMLLRQGEFYVIMLISLLGMYFMISAENFVMLYIGMETASLPLACLVAFDKYQEKSAEAAVKYILTSALSSGVMLFGLSFLYGSLGSFYYSDIALNIVSSPLVKLGFVFFFGGLGFKLSLVPFHLWTADVYEGAPTSVTAYLSVVSKGAATFALIFVLYKVFGRIELIWNNILCWLLLATIVLGNLFAIRQQNIKRFFAFSSISQAGYILLGIIAGTAQGMTSTIFYTLVYLFSNLAAFGVIASVEYQTNGDTRIVSFNGLYRSNPGLAFVMMLAVFSLGGIPPFAGFFSKFFIFMAAAEQKQYILVFIALLNTVMSLYYYLLIVKAMFIEKRGEVVLEKIGIDNYNRISMVICTIGIFVIGFLSAIYEYIETISFGVLQK.

The next 13 helical transmembrane spans lie at 5–25 (NFLC…LFLY), 40–60 (IAIV…FTMY), 69–89 (ISSQ…FLVF), 110–130 (VIML…NFVM), 162–182 (YILT…FLYG), 204–224 (LGFV…PFHL), 237–257 (VTAY…IFVL), 266–286 (LIWN…GNLF), 296–316 (FFAF…IAGT), 324–344 (IFYT…IASV), 368–388 (AFVM…AGFF), 404–424 (ILVF…LLIV), and 450–470 (MVIC…YEYI).

Belongs to the complex I subunit 2 family. In terms of assembly, NDH-1 is composed of 14 different subunits. Subunits NuoA, H, J, K, L, M, N constitute the membrane sector of the complex.

The protein localises to the cell inner membrane. It catalyses the reaction a quinone + NADH + 5 H(+)(in) = a quinol + NAD(+) + 4 H(+)(out). Functionally, NDH-1 shuttles electrons from NADH, via FMN and iron-sulfur (Fe-S) centers, to quinones in the respiratory chain. The immediate electron acceptor for the enzyme in this species is believed to be a menaquinone. Couples the redox reaction to proton translocation (for every two electrons transferred, four hydrogen ions are translocated across the cytoplasmic membrane), and thus conserves the redox energy in a proton gradient. The chain is NADH-quinone oxidoreductase subunit N from Azobacteroides pseudotrichonymphae genomovar. CFP2.